Consider the following 323-residue polypeptide: Ankyrin repeat and SOCS box protein 11 (323 aa).

ANK repeat units lie at residues 64–93 (ADRSPLHEAAAQGRLLALKTLIAQGVNVNL), 97–126 (NRVSSLHEACLGGHVACAKALLENGAHVNG), 130–159 (HGATPLFNACCSGSAACVNVLLEFGAKAQF), 162–191 (HLASPIHEAVKRGHRECMEILLANNVNIDH), 195–224 (QLGTPLYVACTYQRVDCVKKLLELGASVDH), and 227–256 (WLDTPLHAAARQSNVEVIHLLTDYGANLKR). The SOCS box domain occupies 274–323 (VEQALLLCEGPPALSQLCRLCVRKCLGRACHQAIHKLHLPEPLERFLLYQ).

Belongs to the ankyrin SOCS box (ASB) family. Substrate-recognition component of the ECS(ASB11) complex, composed of ASB11, CUL5, ELOB, ELOC and RNF7/RBX2.

Its subcellular location is the endoplasmic reticulum. Its pathway is protein modification; protein ubiquitination. Substrate-recognition component of a cullin-5-RING E3 ubiquitin-protein ligase complex (ECS complex, also named CRL5 complex), which mediates the ubiquitination and subsequent proteasomal degradation of target proteins, such as BIK, DIRAS2 and RPN1. The ECS(ASB11) complex acts as a regulator of the endoplasmic reticulum unfolded protein response by mediating ubiquitination and degradation of BIK. This is Ankyrin repeat and SOCS box protein 11 (ASB11) from Pongo abelii (Sumatran orangutan).